Reading from the N-terminus, the 423-residue chain is Pentamidine resistance factor, mitochondrial (423 aa).

A helical membrane pass occupies residues 199–219; the sequence is PVFFTLVFIFEEVSVLIFTFF.

As to quaternary structure, interacts with COX18. This interaction may be essential for its insertion into mitochondrial inner membrane.

The protein localises to the mitochondrion inner membrane. Probably involved in mitochondrial export. Confers resistance to the anti-pneumocystis carinii drug pentamidine. May act by the removal of pentamidine, or its damage targets, from the matrix by an active-transport mechanism. The protein is Pentamidine resistance factor, mitochondrial (PNT1) of Saccharomyces cerevisiae (strain ATCC 204508 / S288c) (Baker's yeast).